Consider the following 439-residue polypeptide: MIRLFEWLTQESLDLHYSLEESGIHGTSIVLNDDGFLPEGIISPYTFFCEVEMDGSPLYFNQLEVPYLWQITGTNIEGEIWNRSSKRGVIHYHEPKYLRFVQSVDWLYPDGSIYMTDHYNKYGWAFARTYFFSDQQVSHKKYYTKSGQEVLSENILTGDILLNWKGKVYHFTKKVDFFLFYFKKSGLDLSSIWYNSLGMPFLISYYLGGEGRDILFWQENLADQLPGNMQIIFSGRTSRTKKVIVQDRSVYKKLLHLVEEKNKEMISFLNIIYPKLRENYSRKEILIVTNSDQIEGIETLTDNLSAYTFHIGALTSMSDKLQNIGQKENVLLYPNMSPKTMLDLLEQCDIYLDINHGNEVLSIVRLAFERSLLILAYDNTVHSPIFHHESGIFNHSKPQTLSDWLLNLDDYSQTVSCWRSDLFPMTYRDYKQVLVSNVD.

Belongs to the GtfB family. In terms of assembly, interacts with glycosyltransferase GtfA (Gtf2); probably forms a heterotetramer with 2 subunits each of GtfA and GtfB. Part of the accessory SecA2/SecY2 protein translocation apparatus.

It localises to the cell membrane. Its pathway is protein modification; protein glycosylation. Functionally, required for the polymorphic O-glycosylation of the serine-rich repeat protein Fap1. A stabilizing protein that is part of the accessory SecA2/SecY2 system specifically required to export Fap1, a serine-rich fimbrial adhesin encoded upstream in the same operon. The GtfA-GtfB (Gtf1-Gtf2 in this bacteria) complex adds GlcNAc from UDP-GlcNAc to Fap1, attaching the first sugar residue. Cannot use not UDP-Glc as substrate. Stabilizes the glycosylation activity of GtfA, causing it to partially localize to the cellular membrane where it is more protease resistant. This is UDP-N-acetylglucosamine--peptide N-acetylglucosaminyltransferase stabilizing protein GtfB from Streptococcus parasanguinis.